Here is a 419-residue protein sequence, read N- to C-terminus: L-rhamnose isomerase (419 aa).

Mn(2+) is bound by residues His-262, Asp-294, and Asp-296.

It belongs to the rhamnose isomerase family. Homotetramer. Mn(2+) serves as cofactor.

It localises to the cytoplasm. The catalysed reaction is L-rhamnopyranose = L-rhamnulose. It participates in carbohydrate degradation; L-rhamnose degradation; glycerone phosphate from L-rhamnose: step 1/3. Catalyzes the interconversion of L-rhamnose and L-rhamnulose. The polypeptide is L-rhamnose isomerase (Citrobacter koseri (strain ATCC BAA-895 / CDC 4225-83 / SGSC4696)).